A 335-amino-acid polypeptide reads, in one-letter code: Beta-ketoacyl-[acyl-carrier-protein] synthase III (335 aa).

Active-site residues include cysteine 119 and histidine 261. Residues 262 to 266 (QANQR) are ACP-binding. Asparagine 291 is a catalytic residue.

This sequence belongs to the thiolase-like superfamily. FabH family. Homodimer.

It localises to the cytoplasm. It carries out the reaction malonyl-[ACP] + acetyl-CoA + H(+) = 3-oxobutanoyl-[ACP] + CO2 + CoA. It participates in lipid metabolism; fatty acid biosynthesis. In terms of biological role, catalyzes the condensation reaction of fatty acid synthesis by the addition to an acyl acceptor of two carbons from malonyl-ACP. Catalyzes the first condensation reaction which initiates fatty acid synthesis and may therefore play a role in governing the total rate of fatty acid production. Possesses both acetoacetyl-ACP synthase and acetyl transacylase activities. Its substrate specificity determines the biosynthesis of branched-chain and/or straight-chain of fatty acids. This Prochlorococcus marinus (strain MIT 9312) protein is Beta-ketoacyl-[acyl-carrier-protein] synthase III.